Consider the following 105-residue polypeptide: U-scoloptoxin(05)-Ssd1a (105 aa).

The signal sequence occupies residues 1–24 (MKEAVKMSCLCIFVFLFLFSLTDA). The segment at 79 to 105 (HVPESNQKDGKVSTHMSSCNTDGCNAN) is disordered. Over residues 92-105 (THMSSCNTDGCNAN) the composition is skewed to polar residues.

It belongs to the scoloptoxin-05 family. Post-translationally, contains 4 disulfide bonds. In terms of tissue distribution, expressed by the venom gland.

Its subcellular location is the secreted. The polypeptide is U-scoloptoxin(05)-Ssd1a (Scolopendra dehaani (Thai centipede)).